The following is a 165-amino-acid chain: Pro-MCH (165 aa).

An N-terminal signal peptide occupies residues 1 to 21 (MAKMTLSSYMLMLAFSLFSQG). The disordered stretch occupies residues 66-89 (YKNDESGFMNDDDNKNSKNTGSKQ). At Ile-143 the chain carries Isoleucine amide. Cys-153 and Cys-162 are joined by a disulfide.

This sequence belongs to the MCH family. Post-translationally, pro-MCH is processed differentially in the brain and in peripheral organs producing two neuropeptides; NEI and MCH. A third peptide, NGE, may also be produced. Preferential processing in neurons by prohormone convertase 2 (PC2) generates NEI. MCH is generated in neurons of the lateral hypothalmic area by several prohormone convertases including PC1/3, PC2 and PC5/6. As to expression, predominantly expressed in hypothalamus. Also found in heart, intestine, spleen and testis (spermatogonia, early spermatocytes and Sertoli cells). In brain only mature MCH and NEI peptides are present. In peripheral tissues a large product, encompassing the NEI and MCH domains of the precursor, is found predominantly.

It localises to the secreted. Its function is as follows. MCH may act as a neurotransmitter or neuromodulator in a broad array of neuronal functions directed toward the regulation of goal-directed behavior, such as food intake, and general arousal. The sequence is that of Pro-MCH (Pmch) from Mus musculus (Mouse).